An 83-amino-acid polypeptide reads, in one-letter code: Probable insulin-like peptide alpha-type 2 (83 aa).

An N-terminal signal peptide occupies residues 1-21; it reads MHTTTILICFFIFLVQVSTMD. Cystine bridges form between Cys32/Cys66, Cys44/Cys79, and Cys54/Cys80.

This sequence belongs to the insulin family.

It is found in the secreted. The chain is Probable insulin-like peptide alpha-type 2 (ins-22) from Caenorhabditis elegans.